A 260-amino-acid polypeptide reads, in one-letter code: Snake venom serine protease Dav-X (260 aa).

Residues 1–18 form the signal peptide; the sequence is MVLIRVLANLLILQLSYA. Positions 19 to 24 are excised as a propeptide; the sequence is QKSSEL. In terms of domain architecture, Peptidase S1 spans 25 to 251; it reads VIGGVECDIN…YTDWIQNIIA (227 aa). 6 disulfide bridges follow: cysteine 31/cysteine 165, cysteine 52/cysteine 68, cysteine 102/cysteine 258, cysteine 144/cysteine 212, cysteine 176/cysteine 191, and cysteine 202/cysteine 227. The active-site Charge relay system is the histidine 67. An N-linked (GlcNAc...) asparagine glycan is attached at asparagine 81. Aspartate 112 acts as the Charge relay system in catalysis. N-linked (GlcNAc...) asparagine glycans are attached at residues asparagine 124 and asparagine 172. The active-site Charge relay system is serine 206. N-linked (GlcNAc...) asparagine glycosylation is present at asparagine 241.

This sequence belongs to the peptidase S1 family. Snake venom subfamily. As to quaternary structure, monomer. Expressed by the venom gland.

The protein localises to the secreted. Its function is as follows. Snake venom serine protease that may act in the hemostasis system of the prey. The polypeptide is Snake venom serine protease Dav-X (Deinagkistrodon acutus (Hundred-pace snake)).